A 138-amino-acid polypeptide reads, in one-letter code: Ribulose bisphosphate carboxylase small subunit (138 aa).

It belongs to the RuBisCO small chain family. Heterohexadecamer of 8 large and 8 small subunits.

The protein resides in the plastid. It localises to the chloroplast. RuBisCO catalyzes two reactions: the carboxylation of D-ribulose 1,5-bisphosphate, the primary event in carbon dioxide fixation, as well as the oxidative fragmentation of the pentose substrate in the photorespiration process. Both reactions occur simultaneously and in competition at the same active site. Although the small subunit is not catalytic it is essential for maximal activity. This chain is Ribulose bisphosphate carboxylase small subunit, found in Cyanidioschyzon merolae (strain NIES-3377 / 10D) (Unicellular red alga).